Consider the following 351-residue polypeptide: Uroporphyrinogen decarboxylase (351 aa).

Substrate-binding positions include 25-29, F43, D74, Y151, S206, and H325; that span reads RQAGR.

It belongs to the uroporphyrinogen decarboxylase family. Homodimer.

The protein resides in the cytoplasm. The enzyme catalyses uroporphyrinogen III + 4 H(+) = coproporphyrinogen III + 4 CO2. It participates in porphyrin-containing compound metabolism; protoporphyrin-IX biosynthesis; coproporphyrinogen-III from 5-aminolevulinate: step 4/4. Catalyzes the decarboxylation of four acetate groups of uroporphyrinogen-III to yield coproporphyrinogen-III. The sequence is that of Uroporphyrinogen decarboxylase from Chlorobaculum tepidum (strain ATCC 49652 / DSM 12025 / NBRC 103806 / TLS) (Chlorobium tepidum).